The sequence spans 472 residues: Envelope glycoprotein O (472 aa).

The first 31 residues, 1–31, serve as a signal peptide directing secretion; it reads MGKKEMIMVKGIPKIMLLISITFLLLSLINC. N-linked (GlcNAc...) asparagine; by host glycosylation is found at Asn109, Asn136, Asn163, Asn168, Asn177, Asn225, Asn248, Asn294, Asn298, Asn356, Asn391, Asn398, Asn405, Asn439, and Asn460.

The protein belongs to the herpesviridae U47 family. Forms the envelope trimer complex composed of gH, gL, and gO. The trimer interacts with host PDGFRA. In terms of processing, N-glycosylated. The N-terminus is blocked.

The protein localises to the virion membrane. Its function is as follows. Plays a role in viral entry into host cells. Forms a trimeric complex at the surface of the viral envelope together with gH and gL. This complex is required for entry in host fibroblasts. Mechanistically, engages host receptor(s) including PDGFRA to mediate infection. The protein is Envelope glycoprotein O (UL74) of Human cytomegalovirus (strain Merlin) (HHV-5).